A 1097-amino-acid chain; its full sequence is DNA-directed RNA polymerase subunit beta (1097 aa).

The disordered stretch occupies residues 1072–1097 (QDVNPRRSTPSRPTYESLGVADYDED).

The protein belongs to the RNA polymerase beta chain family. In cyanobacteria the RNAP catalytic core is composed of 2 alpha, 1 beta, 1 beta', 1 gamma and 1 omega subunit. When a sigma factor is associated with the core the holoenzyme is formed, which can initiate transcription.

It catalyses the reaction RNA(n) + a ribonucleoside 5'-triphosphate = RNA(n+1) + diphosphate. Functionally, DNA-dependent RNA polymerase catalyzes the transcription of DNA into RNA using the four ribonucleoside triphosphates as substrates. In Parasynechococcus marenigrum (strain WH8102), this protein is DNA-directed RNA polymerase subunit beta.